The primary structure comprises 98 residues: NADH-ubiquinone oxidoreductase chain 4L (98 aa).

3 helical membrane-spanning segments follow: residues 1 to 21, 29 to 49, and 59 to 79; these read MLPI…GVLI, TLLC…LMIT, and IPLI…ALLV.

This sequence belongs to the complex I subunit 4L family. In terms of assembly, core subunit of respiratory chain NADH dehydrogenase (Complex I) which is composed of 45 different subunits.

It is found in the mitochondrion inner membrane. The catalysed reaction is a ubiquinone + NADH + 5 H(+)(in) = a ubiquinol + NAD(+) + 4 H(+)(out). Its function is as follows. Core subunit of the mitochondrial membrane respiratory chain NADH dehydrogenase (Complex I) which catalyzes electron transfer from NADH through the respiratory chain, using ubiquinone as an electron acceptor. Part of the enzyme membrane arm which is embedded in the lipid bilayer and involved in proton translocation. The polypeptide is NADH-ubiquinone oxidoreductase chain 4L (MT-ND4L) (Phascogale tapoatafa (Common wambenger)).